We begin with the raw amino-acid sequence, 270 residues long: Aliphatic sulfonates import ATP-binding protein SsuB 3 (270 aa).

Residues 17 to 238 (LAVQNLKKAF…ARGSHRLAAL (222 aa)) form the ABC transporter domain. Residue 49 to 56 (GRSGCGKS) participates in ATP binding.

This sequence belongs to the ABC transporter superfamily. Aliphatic sulfonates importer (TC 3.A.1.17.2) family. As to quaternary structure, the complex is composed of two ATP-binding proteins (SsuB), two transmembrane proteins (SsuC) and a solute-binding protein (SsuA).

Its subcellular location is the cell inner membrane. The catalysed reaction is ATP + H2O + aliphatic sulfonate-[sulfonate-binding protein]Side 1 = ADP + phosphate + aliphatic sulfonateSide 2 + [sulfonate-binding protein]Side 1.. Part of the ABC transporter complex SsuABC involved in aliphatic sulfonates import. Responsible for energy coupling to the transport system. The chain is Aliphatic sulfonates import ATP-binding protein SsuB 3 from Pseudomonas syringae pv. tomato (strain ATCC BAA-871 / DC3000).